The following is a 316-amino-acid chain: NADH-quinone oxidoreductase subunit H (316 aa).

Transmembrane regions (helical) follow at residues 6-26, 74-94, 98-118, 145-165, 177-197, 233-253, 256-276, and 296-316; these read PAVV…LIWV, FVIA…VVPF, VGVI…SLAV, ISYE…AGSF, GWYV…AVAE, YLGI…GWLG, FLPP…FFIL, and VMLP…LSVP.

The protein belongs to the complex I subunit 1 family. In terms of assembly, NDH-1 is composed of 14 different subunits. Subunits NuoA, H, J, K, L, M, N constitute the membrane sector of the complex.

It localises to the cell inner membrane. The catalysed reaction is a quinone + NADH + 5 H(+)(in) = a quinol + NAD(+) + 4 H(+)(out). Its function is as follows. NDH-1 shuttles electrons from NADH, via FMN and iron-sulfur (Fe-S) centers, to quinones in the respiratory chain. The immediate electron acceptor for the enzyme in this species is believed to be ubiquinone. Couples the redox reaction to proton translocation (for every two electrons transferred, four hydrogen ions are translocated across the cytoplasmic membrane), and thus conserves the redox energy in a proton gradient. This subunit may bind ubiquinone. The chain is NADH-quinone oxidoreductase subunit H from Methylococcus capsulatus (strain ATCC 33009 / NCIMB 11132 / Bath).